The primary structure comprises 172 residues: 3-hydroxydecanoyl-[acyl-carrier-protein] dehydratase (172 aa).

His71 is an active-site residue.

This sequence belongs to the thioester dehydratase family. FabA subfamily. In terms of assembly, homodimer.

The protein localises to the cytoplasm. The catalysed reaction is a (3R)-hydroxyacyl-[ACP] = a (2E)-enoyl-[ACP] + H2O. The enzyme catalyses (3R)-hydroxydecanoyl-[ACP] = (2E)-decenoyl-[ACP] + H2O. It catalyses the reaction (2E)-decenoyl-[ACP] = (3Z)-decenoyl-[ACP]. Its pathway is lipid metabolism; fatty acid biosynthesis. In terms of biological role, necessary for the introduction of cis unsaturation into fatty acids. Catalyzes the dehydration of (3R)-3-hydroxydecanoyl-ACP to E-(2)-decenoyl-ACP and then its isomerization to Z-(3)-decenoyl-ACP. Can catalyze the dehydratase reaction for beta-hydroxyacyl-ACPs with saturated chain lengths up to 16:0, being most active on intermediate chain length. The chain is 3-hydroxydecanoyl-[acyl-carrier-protein] dehydratase from Serratia proteamaculans (strain 568).